The primary structure comprises 497 residues: ATP-dependent RNA helicase CshA (497 aa).

The Q motif motif lies at 1–29 (MKFSELGLSDSLLKAIKRSGYEEATPIQE). Residues 32–202 (IPMVLEGKDV…VQFMSDPETV (171 aa)) enclose the Helicase ATP-binding domain. 45–52 (AQTGTGKT) is a binding site for ATP. The short motif at 150–153 (DEAD) is the DEAD box element. Residues 228 to 373 (DIMTRLIDVQ…PLKPPTAEEA (146 aa)) enclose the Helicase C-terminal domain. Residues 425 to 497 (AASEVPVKIT…SFNIRHRKEN (73 aa)) are disordered. Residues 448–458 (RNGNRNNSHGG) show a composition bias toward low complexity. Composition is skewed to basic residues over residues 459 to 473 (NHYR…QHGS) and 481 to 497 (KSHS…RKEN).

Belongs to the DEAD box helicase family. CshA subfamily. In terms of assembly, oligomerizes, may be a member of the RNA degradosome.

It is found in the cytoplasm. Its subcellular location is the cell membrane. It catalyses the reaction ATP + H2O = ADP + phosphate + H(+). DEAD-box RNA helicase possibly involved in RNA degradation. Unwinds dsRNA in both 5'- and 3'-directions, has RNA-dependent ATPase activity. Over-expression leads to cell aggregation. The sequence is that of ATP-dependent RNA helicase CshA from Limosilactobacillus reuteri (Lactobacillus reuteri).